Here is a 560-residue protein sequence, read N- to C-terminus: MEFRQEEFRKLAGRALGKLHRLLEKRQEGAETLELSADGRPVTTQTRDPPVVDCTCFGLPRRYIIAIMSGLGFCISFGIRCNLGVAIVSMVNNSTTHRGGHVVMQKAQFNWDPETVGLIHGSFFWGYIVTQIPGGFICQKFAANRVFGFAIVATSTLNMLIPSAARVHYGCVIFVRILQGLVEGVTYPACHGIWSKWAPPLERSRLATTAFCGSYAGAVVAMPLAGVLVQYSGWSSVFYVYGSFGIFWYLFWLLVSYESPALHPSISEEERKYIEDAIGESAKLMNPVTKFNTPWRRFFTSMPVYAIIVANFCRSWTFYLLLISQPAYFEEVFGFEISKVGLVSALPHLVMTIIVPIGGQIADFLRSRRIMSTTNVRKLMNCGGFGMEATLLLVVGYSHSKGVAISFLVLAVGFSGFAISGFNVNHLDIAPRYASILMGISNGVGTLSGMVCPIIVGAMTKHKTREEWQYVFLIASLVHYGGVIFYGVFASGEKQPWAEPEEMSEEKCGFVGHDQLAGSDESEMEDEAEPPGAPPAPPPSYGATHSTVQPPRPPPPVRDY.

The Cytoplasmic segment spans residues 1 to 63 (MEFRQEEFRK…CTCFGLPRRY (63 aa)). Residues 64 to 84 (IIAIMSGLGFCISFGIRCNLG) form a helical membrane-spanning segment. Over 85–116 (VAIVSMVNNSTTHRGGHVVMQKAQFNWDPETV) the chain is Extracellular. A helical membrane pass occupies residues 117–137 (GLIHGSFFWGYIVTQIPGGFI). The Cytoplasmic segment spans residues 138–140 (CQK). A helical transmembrane segment spans residues 141-161 (FAANRVFGFAIVATSTLNMLI). The Extracellular segment spans residues 162–169 (PSAARVHY). The helical transmembrane segment at 170-190 (GCVIFVRILQGLVEGVTYPAC) threads the bilayer. The Cytoplasmic segment spans residues 191–208 (HGIWSKWAPPLERSRLAT). Residues 209–229 (TAFCGSYAGAVVAMPLAGVLV) form a helical membrane-spanning segment. The Extracellular segment spans residues 230–236 (QYSGWSS). Residues 237-257 (VFYVYGSFGIFWYLFWLLVSY) form a helical membrane-spanning segment. Residues 258–302 (ESPALHPSISEEERKYIEDAIGESAKLMNPVTKFNTPWRRFFTSM) lie on the Cytoplasmic side of the membrane. A helical transmembrane segment spans residues 303 to 323 (PVYAIIVANFCRSWTFYLLLI). The Extracellular portion of the chain corresponds to 324 to 341 (SQPAYFEEVFGFEISKVG). Residues 342 to 362 (LVSALPHLVMTIIVPIGGQIA) form a helical membrane-spanning segment. Over 363–378 (DFLRSRRIMSTTNVRK) the chain is Cytoplasmic. The helical transmembrane segment at 379 to 399 (LMNCGGFGMEATLLLVVGYSH) threads the bilayer. The Extracellular segment spans residues 400–401 (SK). Residues 402 to 422 (GVAISFLVLAVGFSGFAISGF) traverse the membrane as a helical segment. The Cytoplasmic segment spans residues 423–435 (NVNHLDIAPRYAS). Residues 436-456 (ILMGISNGVGTLSGMVCPIIV) traverse the membrane as a helical segment. The Extracellular segment spans residues 457–469 (GAMTKHKTREEWQ). Residues 470–490 (YVFLIASLVHYGGVIFYGVFA) form a helical membrane-spanning segment. At 491–560 (SGEKQPWAEP…PRPPPPVRDY (70 aa)) the chain is on the cytoplasmic side. A disordered region spans residues 497-560 (WAEPEEMSEE…PRPPPPVRDY (64 aa)). Ser-504 carries the post-translational modification Phosphoserine. Residues 520–529 (DESEMEDEAE) are compositionally biased toward acidic residues. Composition is skewed to pro residues over residues 531-540 (PGAPPAPPPS) and 550-560 (PPRPPPPVRDY).

It belongs to the major facilitator superfamily. Sodium/anion cotransporter family. VGLUT subfamily. Interacts with SHANK3.

It localises to the cytoplasmic vesicle. It is found in the secretory vesicle. The protein resides in the synaptic vesicle membrane. The protein localises to the cell membrane. Its subcellular location is the synapse. It localises to the synaptosome. The catalysed reaction is L-glutamate(out) = L-glutamate(in). It catalyses the reaction chloride(in) = chloride(out). The enzyme catalyses 3 Na(+)(out) + phosphate(out) = 3 Na(+)(in) + phosphate(in). It carries out the reaction phosphate(in) = phosphate(out). The catalysed reaction is K(+)(in) + H(+)(out) = K(+)(out) + H(+)(in). Its activity is regulated as follows. Chloride channel activity is allosterically activated by lumenal H(+) and Cl(-) leading to synaptic vesicles acidification. The L-glutamate transport activity is allosterically activated by lumenal H(+) and Cl(-). The allosteric activation by H(+) efficiently prevents non-vesicular efflux across the plasma membrane, thereby restricting L-glutamate transport activity to acidic membranes such as synaptic vesicles. Multifunctional transporter that transports L-glutamate as well as multiple ions such as chloride, proton, potassium, sodium and phosphate. At the synaptic vesicle membrane, mainly functions as an uniporter which transports preferentially L-glutamate but also phosphate from the cytoplasm into synaptic vesicles at presynaptic nerve terminals of excitatory neural cells. The L-glutamate or phosphate uniporter activity is electrogenic and is driven by the proton electrochemical gradient, mainly by the electrical gradient established by the vacuolar H(+)-ATPase across the synaptic vesicle membrane. In addition, functions as a chloride channel that allows a chloride permeation through the synaptic vesicle membrane that affects the proton electrochemical gradient and promotes synaptic vesicles acidification. Moreover, may function as a K(+)/H(+) antiport allowing to maintain the electrical gradient and to decrease chemical gradient and therefore sustain vesicular glutamate uptake. The vesicular K(+)/H(+) antiport activity is electroneutral. At the plasma membrane, following exocytosis, functions as a symporter of Na(+) and phosphate from the extracellular space to the cytoplasm allowing synaptic phosphate homeostasis regulation. The symporter activity is driven by an inside negative membrane potential and is electrogenic. Is necessary for synaptic signaling of visual-evoked responses from photoreceptors. This is Vesicular glutamate transporter 1 from Bos taurus (Bovine).